Consider the following 375-residue polypeptide: DNA replication and repair protein RecF (375 aa).

30–37 contacts ATP; it reads GDNAQGKT.

The protein belongs to the RecF family.

It localises to the cytoplasm. Functionally, the RecF protein is involved in DNA metabolism; it is required for DNA replication and normal SOS inducibility. RecF binds preferentially to single-stranded, linear DNA. It also seems to bind ATP. The protein is DNA replication and repair protein RecF of Symbiobacterium thermophilum (strain DSM 24528 / JCM 14929 / IAM 14863 / T).